A 226-amino-acid chain; its full sequence is ATP synthase subunit a (226 aa).

6 helical membrane-spanning segments follow: residues 17–37 (FSYFFHIGLVALIAVIVAMMA), 79–99 (LVATLGIIVFFSNIIGIIPGF), 105–125 (SLNLTLSLAIIVFVYYHFEGI), 134–154 (FAHFMGPIKLLAPLMFPIEIV), 176–196 (LFLMVILALVPYIAPLPAYVL), and 199–219 (FMAFLQAFIFMILTYVYLAGA).

This sequence belongs to the ATPase A chain family. F-type ATPases have 2 components, CF(1) - the catalytic core - and CF(0) - the membrane proton channel. CF(1) has five subunits: alpha(3), beta(3), gamma(1), delta(1), epsilon(1). CF(0) has three main subunits: a(1), b(2) and c(9-12). The alpha and beta chains form an alternating ring which encloses part of the gamma chain. CF(1) is attached to CF(0) by a central stalk formed by the gamma and epsilon chains, while a peripheral stalk is formed by the delta and b chains.

It localises to the cell inner membrane. Functionally, key component of the proton channel; it plays a direct role in the translocation of protons across the membrane. The polypeptide is ATP synthase subunit a (Campylobacter jejuni subsp. jejuni serotype O:6 (strain 81116 / NCTC 11828)).